The chain runs to 145 residues: D-aminoacyl-tRNA deacylase (145 aa).

The Gly-cisPro motif, important for rejection of L-amino acids signature appears at 137–138 (GP).

Belongs to the DTD family. Homodimer.

It is found in the cytoplasm. The catalysed reaction is glycyl-tRNA(Ala) + H2O = tRNA(Ala) + glycine + H(+). The enzyme catalyses a D-aminoacyl-tRNA + H2O = a tRNA + a D-alpha-amino acid + H(+). Its function is as follows. An aminoacyl-tRNA editing enzyme that deacylates mischarged D-aminoacyl-tRNAs. Also deacylates mischarged glycyl-tRNA(Ala), protecting cells against glycine mischarging by AlaRS. Acts via tRNA-based rather than protein-based catalysis; rejects L-amino acids rather than detecting D-amino acids in the active site. By recycling D-aminoacyl-tRNA to D-amino acids and free tRNA molecules, this enzyme counteracts the toxicity associated with the formation of D-aminoacyl-tRNA entities in vivo and helps enforce protein L-homochirality. This is D-aminoacyl-tRNA deacylase from Escherichia coli O81 (strain ED1a).